Here is a 303-residue protein sequence, read N- to C-terminus: Protoheme IX farnesyltransferase (303 aa).

The next 7 membrane-spanning stretches (helical) occupy residues 25–45 (MGLV…AIVL), 54–74 (IPQI…ACAL), 118–138 (LLFA…VGYV), 151–171 (WNTV…WTAI), 177–197 (LVAV…FYAL), 230–250 (LVVL…FIVL), and 280–300 (FIYS…ISLI).

The protein belongs to the UbiA prenyltransferase family. Protoheme IX farnesyltransferase subfamily. Interacts with CtaA.

The protein localises to the cell membrane. It carries out the reaction heme b + (2E,6E)-farnesyl diphosphate + H2O = Fe(II)-heme o + diphosphate. The protein operates within porphyrin-containing compound metabolism; heme O biosynthesis; heme O from protoheme: step 1/1. Functionally, converts heme B (protoheme IX) to heme O by substitution of the vinyl group on carbon 2 of heme B porphyrin ring with a hydroxyethyl farnesyl side group. The sequence is that of Protoheme IX farnesyltransferase from Staphylococcus saprophyticus subsp. saprophyticus (strain ATCC 15305 / DSM 20229 / NCIMB 8711 / NCTC 7292 / S-41).